The sequence spans 165 residues: UPF0303 protein BTH_I2506 (165 aa).

This sequence belongs to the UPF0303 family.

This chain is UPF0303 protein BTH_I2506, found in Burkholderia thailandensis (strain ATCC 700388 / DSM 13276 / CCUG 48851 / CIP 106301 / E264).